Reading from the N-terminus, the 275-residue chain is Transmembrane protein 202 (275 aa).

Transmembrane regions (helical) follow at residues 60–80, 116–136, 151–171, and 193–213; these read SGFS…QFLV, ALFL…LSSC, VSML…LFLA, and WCSE…FITF.

The protein localises to the membrane. The protein is Transmembrane protein 202 (Tmem202) of Mus musculus (Mouse).